The chain runs to 162 residues: NADH-quinone oxidoreductase subunit I (162 aa).

4Fe-4S ferredoxin-type domains are found at residues 53–83 (LRRY…IDSE) and 93–122 (TRYD…ETRI). [4Fe-4S] cluster contacts are provided by cysteine 63, cysteine 66, cysteine 69, cysteine 73, cysteine 102, cysteine 105, cysteine 108, and cysteine 112.

This sequence belongs to the complex I 23 kDa subunit family. As to quaternary structure, NDH-1 is composed of 14 different subunits. Subunits NuoA, H, J, K, L, M, N constitute the membrane sector of the complex. [4Fe-4S] cluster is required as a cofactor.

Its subcellular location is the cell inner membrane. It carries out the reaction a quinone + NADH + 5 H(+)(in) = a quinol + NAD(+) + 4 H(+)(out). NDH-1 shuttles electrons from NADH, via FMN and iron-sulfur (Fe-S) centers, to quinones in the respiratory chain. The immediate electron acceptor for the enzyme in this species is believed to be ubiquinone. Couples the redox reaction to proton translocation (for every two electrons transferred, four hydrogen ions are translocated across the cytoplasmic membrane), and thus conserves the redox energy in a proton gradient. The protein is NADH-quinone oxidoreductase subunit I of Thiobacillus denitrificans (strain ATCC 25259 / T1).